The following is a 210-amino-acid chain: Large ribosomal subunit protein uL3 (210 aa).

The interval 120-143 (FQGNIKKDGQSRGPMGHGSRYHRR) is disordered.

Belongs to the universal ribosomal protein uL3 family. As to quaternary structure, part of the 50S ribosomal subunit. Forms a cluster with proteins L14 and L19.

In terms of biological role, one of the primary rRNA binding proteins, it binds directly near the 3'-end of the 23S rRNA, where it nucleates assembly of the 50S subunit. This chain is Large ribosomal subunit protein uL3, found in Latilactobacillus sakei subsp. sakei (strain 23K) (Lactobacillus sakei subsp. sakei).